We begin with the raw amino-acid sequence, 276 residues long: Non-homologous end joining protein Ku (276 aa).

In terms of domain architecture, Ku spans 11–177; that stretch reads ISFGLVHIPI…PEEIRSMEPL (167 aa). Residues 256–276 are disordered; the sequence is QVKTQQKKEAAPKKERRRKTS.

Belongs to the prokaryotic Ku family. As to quaternary structure, homodimer. Interacts with LigD.

Functionally, with LigD forms a non-homologous end joining (NHEJ) DNA repair enzyme, which repairs dsDNA breaks with reduced fidelity. Binds linear dsDNA with 5'- and 3'- overhangs but not closed circular dsDNA nor ssDNA. Recruits and stimulates the ligase activity of LigD. This is Non-homologous end joining protein Ku from Heliobacterium modesticaldum (strain ATCC 51547 / Ice1).